The following is a 385-amino-acid chain: Cytochrome b (385 aa).

The next 4 membrane-spanning stretches (helical) occupy residues 32–52 (LGSLLGLCLVIQILTGIFMAM), 76–98 (WLLRYMHANGASFFFICMYMHIA), 113–133 (VWIVGVIIFVLTMAAAFLGYC), and 179–199 (FFALHYLVPFIIAALVVMHFM). The heme b site is built by histidine 82 and histidine 96. Heme b is bound by residues histidine 183 and histidine 197. A ubiquinone is bound at residue histidine 202. Helical transmembrane passes span 225 to 245 (FIFKDLITVFVFLIFFSLFVF), 289 to 309 (LLGVITMFAAILVLLVLPITD), 321 to 341 (LSKFFFFLFIFNFLLLGQIGQ), and 348 to 368 (FVLMGQIATFLYFAYFIIIVP).

The protein belongs to the cytochrome b family. As to quaternary structure, fungal cytochrome b-c1 complex contains 10 subunits; 3 respiratory subunits, 2 core proteins and 5 low-molecular weight proteins. Cytochrome b-c1 complex is a homodimer. Requires heme b as cofactor.

It localises to the mitochondrion inner membrane. In terms of biological role, component of the ubiquinol-cytochrome c reductase complex (complex III or cytochrome b-c1 complex) that is part of the mitochondrial respiratory chain. The b-c1 complex mediates electron transfer from ubiquinol to cytochrome c. Contributes to the generation of a proton gradient across the mitochondrial membrane that is then used for ATP synthesis. This Candida glabrata (strain ATCC 2001 / BCRC 20586 / JCM 3761 / NBRC 0622 / NRRL Y-65 / CBS 138) (Yeast) protein is Cytochrome b (COB).